We begin with the raw amino-acid sequence, 348 residues long: Galanin receptor type 1 (348 aa).

Over 1 to 34 the chain is Extracellular; it reads MELAMVNLSEGNGSDPEPPAPESRPLFGIGVENF. 2 N-linked (GlcNAc...) asparagine glycosylation sites follow: Asn7 and Asn12. The helical transmembrane segment at 35–55 threads the bilayer; sequence ITLVVFGLIFAMGVLGNSLVI. Topologically, residues 56–70 are cytoplasmic; it reads TVLARSKPGKPRSTT. The helical transmembrane segment at 71-91 threads the bilayer; sequence NLFILNLSIADLAYLLFCIPF. Residues 92–109 are Extracellular-facing; it reads QATVYALPTWVLGAFICK. Cys108 and Cys186 are joined by a disulfide. Residues 110–131 traverse the membrane as a helical segment; it reads FIHYFFTVSMLVSIFTLAAMSV. Residues 132–151 lie on the Cytoplasmic side of the membrane; the sequence is DRYVAIVHSRRSSSLRVSRN. The helical transmembrane segment at 152–172 threads the bilayer; sequence ALLGVGFIWALSIAMASPVAY. Residues 173-197 lie on the Extracellular side of the membrane; it reads HQRLFHRDSNQTFCWEQWPNKLHKK. Asn182 carries N-linked (GlcNAc...) asparagine glycosylation. Residues 198–218 form a helical membrane-spanning segment; it reads AYVVCTFVFGYLLPLLLICFC. The Cytoplasmic segment spans residues 219–247; that stretch reads YAKVLNHLHKKLKNMSKKSEASKKKTAQT. Residues 248 to 268 traverse the membrane as a helical segment; sequence VLVVVVVFGISWLPHHVVHLW. The Extracellular portion of the chain corresponds to 269–270; it reads AE. Residues 271 to 291 form a helical membrane-spanning segment; that stretch reads FGAFPLTPASFFFRITAHCLA. At 292–348 the chain is on the cytoplasmic side; sequence YSNSSVNPIIYAFLSENFRKAYKQVFKCHVCDESPRSETKENKSRMDTPPSTNCTHV. Cys319 carries S-palmitoyl cysteine lipidation. Positions 328–337 are enriched in basic and acidic residues; the sequence is SETKENKSRM. Positions 328 to 348 are disordered; it reads SETKENKSRMDTPPSTNCTHV.

The protein belongs to the G-protein coupled receptor 1 family. Interacts with GRP39 AND HTR1A. Three cysteine residues are found in the C-terminus, at least one of which may be palmitoylated. Expression is detected in brain, spinal cord, heart and skeletal muscle.

The protein localises to the cell membrane. Its function is as follows. Receptor for the hormone galanin. The activity of this receptor is mediated by G proteins that inhibit adenylate cyclase activity. In Mus musculus (Mouse), this protein is Galanin receptor type 1 (Galr1).